Reading from the N-terminus, the 388-residue chain is Quinolone resistance protein NorA (388 aa).

12 helical membrane passes run 5–25, 42–62, 69–89, 99–119, 129–149, 157–177, 201–221, 239–259, 269–289, 293–313, 331–351, and 355–375; these read IFVL…VIPV, LLVA…GTLA, LIIC…AVGH, VIGG…IADV, FGYM…IGGF, MPFY…VVLI, WKVF…LSAF, DISI…IYFF, LTFI…LVIA, WTIM…RPAI, LNST…GALF, and IEAP…IVLI.

It belongs to the major facilitator superfamily. TCR/Tet family.

The protein resides in the cell membrane. Involved in quinolone resistance. May constitute a membrane-associated active efflux pump of hydrophilic quinolones. This chain is Quinolone resistance protein NorA (norA), found in Staphylococcus aureus (strain MRSA252).